The sequence spans 182 residues: Trypsin inhibitor 2 (182 aa).

Pyrrolidone carboxylic acid is present on glutamine 1. Intrachain disulfides connect cysteine 40–cysteine 84 and cysteine 136–cysteine 147.

It belongs to the protease inhibitor I3 (leguminous Kunitz-type inhibitor) family.

This Psophocarpus tetragonolobus (Winged bean) protein is Trypsin inhibitor 2.